The primary structure comprises 353 residues: Probable WRKY transcription factor 7 (353 aa).

A disordered region spans residues 117–259 (VEEKKPETSS…SSRCHCSKKR (143 aa)). Residues 158–176 (SHNNNNNQNQTKNGSSSSS) are compositionally biased toward low complexity. Composition is skewed to polar residues over residues 184–204 (APST…SFMS) and 213–229 (THMS…QLSG). Residues 275–341 (KMADIPSDEF…YEGDHNHALV (67 aa)) constitute a DNA-binding region (WRKY).

It belongs to the WRKY group II-d family. In young, mature and senescent leaves.

It is found in the nucleus. In terms of biological role, transcription factor. Interacts specifically with the W box (5'-(T)TGAC[CT]-3'), a frequently occurring elicitor-responsive cis-acting element. The protein is Probable WRKY transcription factor 7 (WRKY7) of Arabidopsis thaliana (Mouse-ear cress).